The primary structure comprises 199 residues: Fe/S biogenesis protein NfuA (199 aa).

[4Fe-4S] cluster contacts are provided by C151 and C154.

It belongs to the NfuA family. As to quaternary structure, homodimer. The cofactor is [4Fe-4S] cluster.

Involved in iron-sulfur cluster biogenesis. Binds a 4Fe-4S cluster, can transfer this cluster to apoproteins, and thereby intervenes in the maturation of Fe/S proteins. Could also act as a scaffold/chaperone for damaged Fe/S proteins. The sequence is that of Fe/S biogenesis protein NfuA from Xanthomonas oryzae pv. oryzae (strain PXO99A).